The following is a 279-amino-acid chain: uncharacterized protein (279 aa).

3 stretches are compositionally biased toward low complexity: residues 1–25, 86–151, and 232–250; these read MNEN…NNNN, PSQS…NGNN, and NKNN…DDNN. 3 disordered regions span residues 1-27, 83-153, and 213-260; these read MNEN…NNIK, NLFP…NNID, and QSVN…KVKS.

This is an uncharacterized protein from Dictyostelium discoideum (Social amoeba).